Reading from the N-terminus, the 399-residue chain is MKIKTLTVSDLTNYIKKVIDNDFILNNLSVKGEISNLKFHSSGHIYFSLKDNNSKVNCVMFKSKASLLNIALEDGMEVMVKGRASIYTATGSFQLYCDEIKKEGQGELFIKFEALKEKLSKSGYFDEKYKKNIPMYAKRIGIVTSSTGAVIRDIINVTKRRNSLVDIILYPAKVQGDNAYKEIIAGIEYFNKKKNIDIIIVGRGGGSIEELWNFNEEELAKVIFNSKLPIISAVGHEVDFTISDFVSDVRAATPSQAAEIAVPLLSDINTRIYEISKSLDYEIQKKLKDCKSRLESNERILKLHSPISKIVNSYLEIDKLKDRLYFAIDIKIKREKQKIESLNNLLSANNPIKVLNKGYAIIEDENNNIIKEISQLNEEKEISVSLSDGNIKGNFIPIK.

This sequence belongs to the XseA family. In terms of assembly, heterooligomer composed of large and small subunits.

The protein localises to the cytoplasm. The catalysed reaction is Exonucleolytic cleavage in either 5'- to 3'- or 3'- to 5'-direction to yield nucleoside 5'-phosphates.. Bidirectionally degrades single-stranded DNA into large acid-insoluble oligonucleotides, which are then degraded further into small acid-soluble oligonucleotides. This chain is Exodeoxyribonuclease 7 large subunit, found in Clostridium botulinum (strain Eklund 17B / Type B).